The sequence spans 170 residues: Cysteine-rich uncharacterized protein 241L (170 aa).

The polypeptide is Cysteine-rich uncharacterized protein 241L (Acheta domesticus (House cricket)).